We begin with the raw amino-acid sequence, 825 residues long: MVFERTLIDLIKGIRSHANDEEAFIATCLLECRKEATSQDADLKSEAILKLAYLEMLGVDISWASFQIVEVMSSSKILQKQKGYLAAVQSFKPDTDVLMLTTNLLKKDLMSSKVPEITLAIDGLSHFSTLGLARDLYRDVLILLNHSVPYVRKRTILLLYRLCLQYPEAISACIPKLRERLDDPDTSVVNAAVSVICELARRAPKNYLEFAPDLFHLLTTSSNNWMLIKLIKLFASLTPYEPRLVKKLIPSLTDIIENTHAMSLLYECINTIVSGNMLVGHSQCDKLASLCASKLRGFFEDTDQNLKYIALLCLRKLANTHPSLVSAQLDIILKCLVDTDTSIRLRALDLVNEIVNKENIRTIVKTLMLQLIVSSDESAVEDIRNSTATRIIEMTSKSTYMNIADFEWLLTVYVDLANIPGIDTGTLLNNQIIDLCVRVKALRPFSVDIFSQAILDPSYVSTTDCSVSEKRTDILPAIIWCLGEYAEFIEEYLDILDALTRPSFKKCSNLAHRLLLQAITKIFCQWCLEEEPTWGVEKFGLVKLWVEKIVSFIEQFLNFQDMEIQRRASEFYILFNQVSDIVNTSDTMEVLELQKKPPYIVQNTMYKLFFGEPLNPVAVKAQRKVMPDENLDLNCPINGVIEVPKELLENIIQSDDSLINFDTEVPSSGIDTFSKKQFNSLESVPVQRDLSSPFYLSSNQHTTTTNSEPENLNVETSMSDEAFNADKVTKVTKNKRRRKIFTSPSLQAMVVAQDEVPEGISLADIENKENPSNSNVYSLISLDPPLSTNQGSMGDIVLETKSPIRVEKKKSKKKKKKKEKTSGKE.

HEAT repeat units follow at residues 131-168, 169-205, 207-243, 244-281, 285-323, 324-360, 363-400, 469-513, 515-547, and 548-584; these read GLARDLYRDVLILLNHSVPYVRKRTILLLYRLCLQYPE, AISACIPKLRERLDDPDTSVVNAAVSVICELARRAPK, YLEFAPDLFHLLTTSSNNWMLIKLIKLFASLTPYEPR, LVKKLIPSLTDIIENTHAMSLLYECINTIVSGNMLVGH, DKLASLCASKLRGFFEDTDQNLKYIALLCLRKLANTHPS, LVSAQLDIILKCLVDTDTSIRLRALDLVNEIVNKENI, IVKTLMLQLIVSSDESAVEDIRNSTATRIIEMTSKSTY, EKRT…LAHR, LLQAITKIFCQWCLEEEPTWGVEKFGLVKLWVE, and KIVSFIEQFLNFQDMEIQRRASEFYILFNQVSDIVNT. A disordered region spans residues 787 to 825; the sequence is STNQGSMGDIVLETKSPIRVEKKKSKKKKKKKEKTSGKE. The span at 807–819 shows a compositional bias: basic residues; that stretch reads EKKKSKKKKKKKE.

This sequence belongs to the adaptor complexes large subunit family. In terms of assembly, adaptor protein complex 3 (AP-3) is a heterotetramer composed of 2 large adaptins (apl5 and apl6), a medium adaptin (apm3) and a small adaptin (aps3).

It is found in the golgi apparatus. It localises to the cytoplasmic vesicle. Its subcellular location is the clathrin-coated vesicle membrane. Functionally, part of the AP-3 complex, an adaptor-related complex which is not clathrin-associated. The complex is associated with the Golgi region as well as more peripheral structures. It facilitates the budding of vesicles from the Golgi membrane and may be directly involved in trafficking to the vacuole. This Schizosaccharomyces pombe (strain 972 / ATCC 24843) (Fission yeast) protein is AP-3 complex subunit delta (apl5).